The sequence spans 630 residues: tRNA uridine 5-carboxymethylaminomethyl modification enzyme MnmG (630 aa).

13–18 (GGGHAG) is a binding site for FAD. 273 to 287 (GPRYCPSIEDKVMRF) provides a ligand contact to NAD(+).

The protein belongs to the MnmG family. As to quaternary structure, homodimer. Heterotetramer of two MnmE and two MnmG subunits. FAD serves as cofactor.

It localises to the cytoplasm. Functionally, NAD-binding protein involved in the addition of a carboxymethylaminomethyl (cmnm) group at the wobble position (U34) of certain tRNAs, forming tRNA-cmnm(5)s(2)U34. The polypeptide is tRNA uridine 5-carboxymethylaminomethyl modification enzyme MnmG (Actinobacillus pleuropneumoniae serotype 7 (strain AP76)).